A 398-amino-acid polypeptide reads, in one-letter code: Exodeoxyribonuclease 7 large subunit (398 aa).

It belongs to the XseA family. Heterooligomer composed of large and small subunits.

It localises to the cytoplasm. The enzyme catalyses Exonucleolytic cleavage in either 5'- to 3'- or 3'- to 5'-direction to yield nucleoside 5'-phosphates.. Its function is as follows. Bidirectionally degrades single-stranded DNA into large acid-insoluble oligonucleotides, which are then degraded further into small acid-soluble oligonucleotides. The sequence is that of Exodeoxyribonuclease 7 large subunit from Anaplasma phagocytophilum (strain HZ).